The primary structure comprises 607 residues: Methylmalonate-semialdehyde dehydrogenase [acylating], mitochondrial (607 aa).

Residues 1–69 (MVRVKQKNLE…KLRSSSSTTT (69 aa)) are disordered. The N-terminal 98 residues, 1 to 98 (MVRVKQKNLE…QFLALRSSWL (98 aa)), are a transit peptide targeting the mitochondrion. A compositionally biased stretch (polar residues) spans 9-30 (LESYRSNGTYPPTWRNPTTSFA). Residues 42–51 (LKSKTKRRRL) are compositionally biased toward basic residues. NAD(+) contacts are provided by phenylalanine 259, lysine 283, glutamate 286, lysine 287, and serine 336. The Nucleophile role is filled by cysteine 391. Glutamate 491 contacts NAD(+).

It belongs to the aldehyde dehydrogenase family.

It localises to the mitochondrion. The catalysed reaction is 2-methyl-3-oxopropanoate + NAD(+) + CoA + H2O = propanoyl-CoA + hydrogencarbonate + NADH + H(+). The protein is Methylmalonate-semialdehyde dehydrogenase [acylating], mitochondrial (ALDH6B2) of Arabidopsis thaliana (Mouse-ear cress).